Consider the following 332-residue polypeptide: Nucleoid-associated protein VP2128 (332 aa).

This sequence belongs to the YejK family.

It localises to the cytoplasm. The protein localises to the nucleoid. This is Nucleoid-associated protein VP2128 from Vibrio parahaemolyticus serotype O3:K6 (strain RIMD 2210633).